The following is a 181-amino-acid chain: Endoribonuclease YbeY (181 aa).

His120, His124, and His130 together coordinate Zn(2+). Positions 157 to 181 (AGGKRPAGGADGADGAGEPGPTAAR) are disordered. Over residues 161 to 174 (RPAGGADGADGAGE) the composition is skewed to gly residues.

This sequence belongs to the endoribonuclease YbeY family. It depends on Zn(2+) as a cofactor.

The protein localises to the cytoplasm. In terms of biological role, single strand-specific metallo-endoribonuclease involved in late-stage 70S ribosome quality control and in maturation of the 3' terminus of the 16S rRNA. This is Endoribonuclease YbeY from Frankia alni (strain DSM 45986 / CECT 9034 / ACN14a).